The sequence spans 226 residues: UPF0173 metal-dependent hydrolase CHY_0920 (226 aa).

It belongs to the UPF0173 family.

In Carboxydothermus hydrogenoformans (strain ATCC BAA-161 / DSM 6008 / Z-2901), this protein is UPF0173 metal-dependent hydrolase CHY_0920.